A 603-amino-acid chain; its full sequence is Granule-bound starch synthase 1, chloroplastic/amyloplastic (603 aa).

The N-terminal 75 residues, 1–75 (MATITGSSMP…SEKSLGKIVC (75 aa)), are a transit peptide targeting the chloroplast. An ADP-alpha-D-glucose-binding site is contributed by Lys91.

The protein belongs to the glycosyltransferase 1 family. Bacterial/plant glycogen synthase subfamily. As to expression, expressed in pods and leaves. No expression in flowers or stipules.

It is found in the plastid. The protein resides in the chloroplast. Its subcellular location is the amyloplast. The enzyme catalyses an NDP-alpha-D-glucose + [(1-&gt;4)-alpha-D-glucosyl](n) = [(1-&gt;4)-alpha-D-glucosyl](n+1) + a ribonucleoside 5'-diphosphate + H(+). It participates in glycan biosynthesis; starch biosynthesis. Its function is as follows. May be responsible for the synthesis of amylose. This is Granule-bound starch synthase 1, chloroplastic/amyloplastic from Pisum sativum (Garden pea).